The primary structure comprises 162 residues: UPF0114 protein Sputw3181_3501 (162 aa).

A run of 3 helical transmembrane segments spans residues 15–35 (IMAPIYLGLSLVLLGLGIKFF), 53–73 (LVLVTLSLIDITLVGGLIVMV), and 136–156 (IMWYLLIHITFVLSAFAMGYL).

Belongs to the UPF0114 family.

The protein localises to the cell membrane. The chain is UPF0114 protein Sputw3181_3501 from Shewanella sp. (strain W3-18-1).